Consider the following 153-residue polypeptide: Ubiquitin/ISG15-conjugating enzyme E2 L6 (153 aa).

Positions 2–149 (TASKRVAKEL…AEEFTLQYGV (148 aa)) constitute a UBC core domain. The active-site Glycyl thioester intermediate is cysteine 86.

This sequence belongs to the ubiquitin-conjugating enzyme family. Interacts with RNF19A, RNF19B and RNF144B. Interacts with FLT3 (tyrosine phosphorylated). In terms of processing, ISGylated.

It catalyses the reaction S-ubiquitinyl-[E1 ubiquitin-activating enzyme]-L-cysteine + [E2 ubiquitin-conjugating enzyme]-L-cysteine = [E1 ubiquitin-activating enzyme]-L-cysteine + S-ubiquitinyl-[E2 ubiquitin-conjugating enzyme]-L-cysteine.. It participates in protein modification; protein ubiquitination. Its function is as follows. Catalyzes the covalent attachment of ubiquitin to other proteins. Functions in the E6/E6-AP-induced ubiquitination of p53/TP53. Promotes ubiquitination and subsequent proteasomal degradation of FLT3. This Rattus norvegicus (Rat) protein is Ubiquitin/ISG15-conjugating enzyme E2 L6 (Ube2l6).